We begin with the raw amino-acid sequence, 346 residues long: Phosphoribosylformylglycinamidine cyclo-ligase (346 aa).

This sequence belongs to the AIR synthase family.

Its subcellular location is the cytoplasm. The catalysed reaction is 2-formamido-N(1)-(5-O-phospho-beta-D-ribosyl)acetamidine + ATP = 5-amino-1-(5-phospho-beta-D-ribosyl)imidazole + ADP + phosphate + H(+). It participates in purine metabolism; IMP biosynthesis via de novo pathway; 5-amino-1-(5-phospho-D-ribosyl)imidazole from N(2)-formyl-N(1)-(5-phospho-D-ribosyl)glycinamide: step 2/2. The sequence is that of Phosphoribosylformylglycinamidine cyclo-ligase from Shewanella pealeana (strain ATCC 700345 / ANG-SQ1).